The chain runs to 115 residues: Integration host factor subunit alpha (115 aa).

This sequence belongs to the bacterial histone-like protein family. Heterodimer of an alpha and a beta chain.

This protein is one of the two subunits of integration host factor, a specific DNA-binding protein that functions in genetic recombination as well as in transcriptional and translational control. The protein is Integration host factor subunit alpha of Burkholderia pseudomallei (strain K96243).